Consider the following 444-residue polypeptide: COP9 signalosome complex subunit 2 (444 aa).

The disordered stretch occupies residues M1–D31. The PCI domain occupies A255 to S417.

The protein belongs to the CSN2 family. In terms of assembly, component of the CSN complex, probably composed of CSN1b, alien/CSN2, CSN3, CSN4, CSN5, CSN6, CSN7 and CSN8. Interacts with Rpn6. In terms of tissue distribution, expressed during embryonic stages 11-14 in the muscle attachment sites (apodemes); pharynx attachment to the roof of the mouth and in the epidermis of the head for the dorsal and ventral prothoracic pharyngeal muscle attachment. From stage 16 onwards expression is seen in all thoracic and abdominal apodemes.

The protein localises to the cytoplasm. Its subcellular location is the nucleus. In terms of biological role, component of the COP9 signalosome complex (CSN), a complex involved in various cellular and developmental processes. The CSN complex is an essential regulator of the ubiquitin (Ubl) conjugation pathway by mediating the deneddylation of the cullin subunits of the SCF-type E3 ligase complexes, leading to decrease the Ubl ligase activity of SCF. The CSN complex plays an essential role in oogenesis and embryogenesis and is required for proper photoreceptor R cell differentiation and promote lamina glial cell migration or axon targeting. It also promotes Ubl-dependent degradation of cyclin E (CycE) during early oogenesis. The polypeptide is COP9 signalosome complex subunit 2 (Drosophila melanogaster (Fruit fly)).